Here is a 505-residue protein sequence, read N- to C-terminus: Maturase K (505 aa).

This sequence belongs to the intron maturase 2 family. MatK subfamily.

Its subcellular location is the plastid. It localises to the chloroplast. Functionally, usually encoded in the trnK tRNA gene intron. Probably assists in splicing its own and other chloroplast group II introns. The sequence is that of Maturase K from Portulacaria afra (Elephant's food).